The primary structure comprises 372 residues: Tetraacyldisaccharide 4'-kinase (372 aa).

65–72 is an ATP binding site; that stretch reads TVGGTGKT. Residues 351-372 form a disordered region; that stretch reads QSTATGMADGLDKEHQDGQPAA. Basic and acidic residues predominate over residues 360–372; it reads GLDKEHQDGQPAA.

This sequence belongs to the LpxK family.

It catalyses the reaction a lipid A disaccharide + ATP = a lipid IVA + ADP + H(+). Its pathway is glycolipid biosynthesis; lipid IV(A) biosynthesis; lipid IV(A) from (3R)-3-hydroxytetradecanoyl-[acyl-carrier-protein] and UDP-N-acetyl-alpha-D-glucosamine: step 6/6. In terms of biological role, transfers the gamma-phosphate of ATP to the 4'-position of a tetraacyldisaccharide 1-phosphate intermediate (termed DS-1-P) to form tetraacyldisaccharide 1,4'-bis-phosphate (lipid IVA). This is Tetraacyldisaccharide 4'-kinase from Cupriavidus metallidurans (strain ATCC 43123 / DSM 2839 / NBRC 102507 / CH34) (Ralstonia metallidurans).